The following is a 164-amino-acid chain: Cell division protein SepF (164 aa).

Residues 29-57 (INKGRGASQQEYDEYYEDSTPTVTQKEDP) are disordered.

It belongs to the SepF family. As to quaternary structure, homodimer. Interacts with FtsZ.

Its subcellular location is the cytoplasm. Its function is as follows. Cell division protein that is part of the divisome complex and is recruited early to the Z-ring. Probably stimulates Z-ring formation, perhaps through the cross-linking of FtsZ protofilaments. Its function overlaps with FtsA. The polypeptide is Cell division protein SepF (Exiguobacterium sibiricum (strain DSM 17290 / CCUG 55495 / CIP 109462 / JCM 13490 / 255-15)).